Reading from the N-terminus, the 462-residue chain is Asparagine--tRNA ligase (462 aa).

Belongs to the class-II aminoacyl-tRNA synthetase family. In terms of assembly, homodimer.

It is found in the cytoplasm. It catalyses the reaction tRNA(Asn) + L-asparagine + ATP = L-asparaginyl-tRNA(Asn) + AMP + diphosphate + H(+). The sequence is that of Asparagine--tRNA ligase from Synechocystis sp. (strain ATCC 27184 / PCC 6803 / Kazusa).